A 477-amino-acid polypeptide reads, in one-letter code: Diacylglycerol O-acyltransferase 1-2 (477 aa).

Positions 1–48 (MAPPPSLAPDRGGGEPDDALRLRARAAAAAGDAPAPQQQQEQRHQEQQ) are disordered. The span at 12–21 (GGGEPDDALR) shows a compositional bias: basic and acidic residues. Over residues 25–40 (RAAAAAGDAPAPQQQQ) the composition is skewed to low complexity. The next 7 membrane-spanning stretches (helical) occupy residues 79–99 (HAGLLNLCIVVLVAVNSRLII), 123–143 (WPLLMCCLTLPTFPLAALMVE), 155–175 (VVILLHIVITTSVLVYPVVVI), 182–202 (VLSGFVLMFLASIIWLKLVSF), 230–250 (NIKWPTFKRLSYFMLAPTLCY), 263–283 (GWVVRQLIKCLVFTGLMGFII), and 319–339 (VWLCMFYCFFHLWLNILAELL). An FYXDWWN motif motif is present at residues 346–352 (FYKDWWN). A run of 3 helical transmembrane segments spans residues 387–407 (GVAILISFLVSAAFHELCVAV), 409–429 (CHIFKFWAFIGIMFQIPLVFL), and 442–462 (VGNMIFWFFFSILGQPMCVLL). Residue His-401 is part of the active site.

It belongs to the membrane-bound acyltransferase family. Sterol o-acyltransferase subfamily.

It is found in the endoplasmic reticulum membrane. The catalysed reaction is an acyl-CoA + a 1,2-diacyl-sn-glycerol = a triacyl-sn-glycerol + CoA. It functions in the pathway glycerolipid metabolism; triacylglycerol biosynthesis. Involved in triacylglycerol (TAG) synthesis. Catalyzes the acylation of the sn-3 hydroxy group of sn-1,2-diacylglycerol using acyl-CoA. This Oryza sativa subsp. japonica (Rice) protein is Diacylglycerol O-acyltransferase 1-2.